Reading from the N-terminus, the 261-residue chain is tRNA pseudouridine synthase A (261 aa).

Catalysis depends on aspartate 51, which acts as the Nucleophile. A substrate-binding site is contributed by tyrosine 109.

Belongs to the tRNA pseudouridine synthase TruA family. In terms of assembly, homodimer.

The enzyme catalyses uridine(38/39/40) in tRNA = pseudouridine(38/39/40) in tRNA. Formation of pseudouridine at positions 38, 39 and 40 in the anticodon stem and loop of transfer RNAs. The sequence is that of tRNA pseudouridine synthase A from Shewanella loihica (strain ATCC BAA-1088 / PV-4).